The primary structure comprises 258 residues: uncharacterized protein (258 aa).

The next 6 helical transmembrane spans lie at 21–41, 73–93, 119–139, 153–173, 182–202, and 229–249; these read LIWL…TIYY, LSQF…GSVA, WLIQ…LAYY, FAAS…AGLA, GAAA…VSLF, and FFGW…VFSV.

It is found in the cell membrane. This is an uncharacterized protein from Bacillus subtilis (strain 168).